The following is a 942-amino-acid chain: Serine/threonine-protein kinase ATG1 (942 aa).

The Protein kinase domain maps to 11–312 (YVVEKEIGKG…FEEFFNNKIV (302 aa)). ATP is bound by residues 17-25 (IGKGSFATV) and Lys41. Asp159 functions as the Proton acceptor in the catalytic mechanism. The segment covering 435 to 452 (NSSRVNKLDKSNLSGKSD) has biased composition (polar residues). Disordered stretches follow at residues 435 to 454 (NSSRVNKLDKSNLSGKSDSS), 505 to 529 (QPHNDIQNLQRAPSTTSGGTSSRRA), and 817 to 836 (NSKPGTHNQSPKSKISNDSN). Positions 515–529 (RAPSTTSGGTSSRRA) are enriched in low complexity. Positions 819–834 (KPGTHNQSPKSKISND) are enriched in polar residues.

Belongs to the protein kinase superfamily. Ser/Thr protein kinase family. APG1/unc-51/ULK1 subfamily. In terms of assembly, homodimer. Forms a ternary complex with ATG13 and ATG17.

Its subcellular location is the cytoplasm. It is found in the preautophagosomal structure membrane. The enzyme catalyses L-seryl-[protein] + ATP = O-phospho-L-seryl-[protein] + ADP + H(+). The catalysed reaction is L-threonyl-[protein] + ATP = O-phospho-L-threonyl-[protein] + ADP + H(+). Its function is as follows. Serine/threonine protein kinase involved in the cytoplasm to vacuole transport (Cvt) and found to be essential in autophagy, where it is required for the formation of autophagosomes. Involved in the clearance of protein aggregates which cannot be efficiently cleared by the proteasome. Required for selective autophagic degradation of the nucleus (nucleophagy) as well as for mitophagy which contributes to regulate mitochondrial quantity and quality by eliminating the mitochondria to a basal level to fulfill cellular energy requirements and preventing excess ROS production. Also involved in endoplasmic reticulum-specific autophagic process, in selective removal of ER-associated degradation (ERAD) substrates. Plays a key role in ATG9 and ATG23 cycling through the pre-autophagosomal structure and is necessary to promote ATG18 binding to ATG9 through phosphorylation of ATG9. Catalyzes phosphorylation of ATG4, decreasing the interaction between ATG4 and ATG8 and impairing deconjugation of PE-conjugated forms of ATG8. Contributes to virulence by conferring resistance to unstable nutrient environments and immune defense of hosts. This chain is Serine/threonine-protein kinase ATG1, found in Candida glabrata (strain ATCC 2001 / BCRC 20586 / JCM 3761 / NBRC 0622 / NRRL Y-65 / CBS 138) (Yeast).